A 110-amino-acid polypeptide reads, in one-letter code: Keratin, type II cytoskeletal 8 (110 aa).

Residues 1–12 (MSTSGPRAFSSR) are head. The region spanning 1-110 (MSTSGPRAFS…LDIEIATYRK (110 aa)) is the IF rod domain. Residues serine 2, serine 4, serine 10, and serine 11 each carry the phosphoserine modification. An Omega-N-methylarginine modification is found at arginine 12. The coil 1A stretch occupies residues 13–25 (FASFIDKVRWSLL). The tract at residues 26–39 (QQQKSNMDNMFESY) is linker 1. A Glycyl lysine isopeptide (Lys-Gly) (interchain with G-Cter in SUMO2) cross-link involves residue lysine 29. The segment at 40–79 (INNLRDVDEAYMNKVELESRLEGLTDEINFLRQIHEEEIR) is coil 1B. At lysine 53 the chain carries N6-acetyllysine. 2 positions are modified to phosphoserine: serine 80 and serine 85. The segment at 80–86 (SLDMDSI) is linker 12. Residues 87 to 110 (IAEVRHGDDLRRLALDIEIATYRK) form a coil 2 region. Residues 88-99 (AEVRHGDDLRRL) are necessary for interaction with PNN. Lysine 110 is covalently cross-linked (Glycyl lysine isopeptide (Lys-Gly) (interchain with G-Cter in SUMO2)).

Belongs to the intermediate filament family. As to quaternary structure, heterotetramer of two type I and two type II keratins. Forms a heterodimer with KRT18. Associates with KRT20. Interacts with PNN. When associated with KRT19, interacts with DMD. Interacts with TCHP. Interacts with APEX1. Interacts with GPER1. Interacts with EPPK1. Interacts with PKP1 and PKP2. O-glycosylated. O-GlcNAcylation at multiple sites increases solubility, and decreases stability by inducing proteasomal degradation. Post-translationally, O-glycosylated (O-GlcNAcylated), in a cell cycle-dependent manner.

The protein localises to the cytoplasm. It localises to the nucleus. It is found in the nucleoplasm. Its subcellular location is the nucleus matrix. Its function is as follows. Together with KRT19, helps to link the contractile apparatus to dystrophin at the costameres of striated muscle. This Mesocricetus auratus (Golden hamster) protein is Keratin, type II cytoskeletal 8.